The following is a 94-amino-acid chain: Small ribosomal subunit protein uS17 (94 aa).

The disordered stretch occupies residues 1 to 22; that stretch reads MSEQTSAASTTDRGDRKTRRGY.

It belongs to the universal ribosomal protein uS17 family. Part of the 30S ribosomal subunit.

One of the primary rRNA binding proteins, it binds specifically to the 5'-end of 16S ribosomal RNA. The sequence is that of Small ribosomal subunit protein uS17 from Kineococcus radiotolerans (strain ATCC BAA-149 / DSM 14245 / SRS30216).